The primary structure comprises 392 residues: Formate-dependent phosphoribosylglycinamide formyltransferase (392 aa).

N(1)-(5-phospho-beta-D-ribosyl)glycinamide contacts are provided by residues 22–23 (EL) and E82. ATP contacts are provided by residues R114, K155, 160-165 (SSGKGQ), 195-198 (EGVV), and E203. The region spanning 119 to 308 (RLAAEELGLP…EFALHVRAFL (190 aa)) is the ATP-grasp domain. The Mg(2+) site is built by E267 and E279. N(1)-(5-phospho-beta-D-ribosyl)glycinamide is bound by residues D286, K355, and 362-363 (RR).

This sequence belongs to the PurK/PurT family. In terms of assembly, homodimer.

It catalyses the reaction N(1)-(5-phospho-beta-D-ribosyl)glycinamide + formate + ATP = N(2)-formyl-N(1)-(5-phospho-beta-D-ribosyl)glycinamide + ADP + phosphate + H(+). It functions in the pathway purine metabolism; IMP biosynthesis via de novo pathway; N(2)-formyl-N(1)-(5-phospho-D-ribosyl)glycinamide from N(1)-(5-phospho-D-ribosyl)glycinamide (formate route): step 1/1. Its function is as follows. Involved in the de novo purine biosynthesis. Catalyzes the transfer of formate to 5-phospho-ribosyl-glycinamide (GAR), producing 5-phospho-ribosyl-N-formylglycinamide (FGAR). Formate is provided by PurU via hydrolysis of 10-formyl-tetrahydrofolate. In Salmonella schwarzengrund (strain CVM19633), this protein is Formate-dependent phosphoribosylglycinamide formyltransferase.